Here is a 143-residue protein sequence, read N- to C-terminus: Large ribosomal subunit protein uL15 (143 aa).

2 stretches are compositionally biased toward basic residues: residues 1–13 (MIRK…KMRG) and 23–38 (KKHR…GNAG). Residues 1 to 38 (MIRKSKKITKMRGSRTCGYGEAKKHRGAGHRGGRGNAG) form a disordered region.

Belongs to the universal ribosomal protein uL15 family. In terms of assembly, part of the 50S ribosomal subunit.

Binds to the 23S rRNA. The protein is Large ribosomal subunit protein uL15 of Methanococcus maripaludis (strain C7 / ATCC BAA-1331).